The following is a 690-amino-acid chain: Elongation factor G (690 aa).

The tr-type G domain occupies 8-283 (ERYRNFGIMA…AVVDFMPSPL (276 aa)). Residues 17-24 (AHIDAGKT), 81-85 (DTPGH), and 135-138 (NKLD) contribute to the GTP site.

The protein belongs to the TRAFAC class translation factor GTPase superfamily. Classic translation factor GTPase family. EF-G/EF-2 subfamily.

The protein localises to the cytoplasm. Its function is as follows. Catalyzes the GTP-dependent ribosomal translocation step during translation elongation. During this step, the ribosome changes from the pre-translocational (PRE) to the post-translocational (POST) state as the newly formed A-site-bound peptidyl-tRNA and P-site-bound deacylated tRNA move to the P and E sites, respectively. Catalyzes the coordinated movement of the two tRNA molecules, the mRNA and conformational changes in the ribosome. The polypeptide is Elongation factor G (Novosphingobium aromaticivorans (strain ATCC 700278 / DSM 12444 / CCUG 56034 / CIP 105152 / NBRC 16084 / F199)).